The primary structure comprises 90 residues: DNA-directed RNA polymerase subunit Rpo11 (90 aa).

It belongs to the archaeal Rpo11/eukaryotic RPB11/RPC19 RNA polymerase subunit family. Part of the 13-subunit RNA polymerase complex.

Its subcellular location is the cytoplasm. The enzyme catalyses RNA(n) + a ribonucleoside 5'-triphosphate = RNA(n+1) + diphosphate. In terms of biological role, DNA-dependent RNA polymerase (RNAP) catalyzes the transcription of DNA into RNA using the four ribonucleoside triphosphates as substrates. This is DNA-directed RNA polymerase subunit Rpo11 from Sulfolobus acidocaldarius (strain ATCC 33909 / DSM 639 / JCM 8929 / NBRC 15157 / NCIMB 11770).